The following is a 448-amino-acid chain: Phosphoglucosamine mutase (448 aa).

Serine 100 acts as the Phosphoserine intermediate in catalysis. Residues serine 100, aspartate 240, aspartate 242, and aspartate 244 each contribute to the Mg(2+) site. Position 100 is a phosphoserine (serine 100).

Belongs to the phosphohexose mutase family. Requires Mg(2+) as cofactor. Activated by phosphorylation.

It carries out the reaction alpha-D-glucosamine 1-phosphate = D-glucosamine 6-phosphate. Its function is as follows. Catalyzes the conversion of glucosamine-6-phosphate to glucosamine-1-phosphate. The sequence is that of Phosphoglucosamine mutase from Bacillus mycoides (strain KBAB4) (Bacillus weihenstephanensis).